Here is a 352-residue protein sequence, read N- to C-terminus: Maleylacetate reductase (352 aa).

This sequence belongs to the iron-containing alcohol dehydrogenase family.

The catalysed reaction is 3-oxoadipate + NAD(+) = maleylacetate + NADH + H(+). It carries out the reaction 3-oxoadipate + NADP(+) = maleylacetate + NADPH + H(+). The protein operates within aromatic compound metabolism; 3-chlorocatechol degradation. The protein is Maleylacetate reductase (clcE) of Pseudomonas aeruginosa.